The primary structure comprises 459 residues: uncharacterized protein (459 aa).

Residues 28–47 (AHDEELTGPPQKPAYAAKPA) are disordered. In terms of domain architecture, FAD-binding PCMH-type spans 35–214 (GPPQKPAYAA…TEVIVKLHPR (180 aa)).

It belongs to the oxygen-dependent FAD-linked oxidoreductase family. The cofactor is FAD.

This is an uncharacterized protein from Mycobacterium tuberculosis (strain CDC 1551 / Oshkosh).